The following is a 246-amino-acid chain: tRNA pseudouridine synthase A (246 aa).

Catalysis depends on Asp-52, which acts as the Nucleophile. Tyr-110 is a binding site for substrate.

This sequence belongs to the tRNA pseudouridine synthase TruA family. As to quaternary structure, homodimer.

It catalyses the reaction uridine(38/39/40) in tRNA = pseudouridine(38/39/40) in tRNA. Functionally, formation of pseudouridine at positions 38, 39 and 40 in the anticodon stem and loop of transfer RNAs. The polypeptide is tRNA pseudouridine synthase A (Exiguobacterium sp. (strain ATCC BAA-1283 / AT1b)).